The sequence spans 216 residues: MFLTSVVSLVVGAISCVSAAPAAASELMQMTPRNSCYGGGLYSSYWADYGNTRYSCGAGGHYDLSWGNGGNVVAGRGWKPASPRAVTYSGSWQCNGNCYLSVYGWTINPLVEYYIVENYGNYNPSAGAQRRGQVTADGSIYDIYISTQHNQPSILGTNTFHQYWSIRRNKRVGGTVSTGVHFNAWRSLGMPLGTYDYMIVATEGFRSSGSASITVS.

A signal peptide spans 1–19; sequence MFLTSVVSLVVGAISCVSA. The 188-residue stretch at 29–216 folds into the GH11 domain; the sequence is QMTPRNSCYG…SSGSASITVS (188 aa). The Nucleophile role is filled by Glu112. The active-site Proton donor is the Glu203.

This sequence belongs to the glycosyl hydrolase 11 (cellulase G) family.

The protein resides in the secreted. The catalysed reaction is Endohydrolysis of (1-&gt;4)-beta-D-xylosidic linkages in xylans.. The protein operates within glycan degradation; xylan degradation. Functionally, endo-1,4-beta-xylanase involved in the hydrolysis of xylan, a major structural heterogeneous polysaccharide found in plant biomass representing the second most abundant polysaccharide in the biosphere, after cellulose. This chain is Endo-1,4-beta-xylanase 1 (xyl1), found in Claviceps purpurea (Ergot fungus).